We begin with the raw amino-acid sequence, 206 residues long: LexA repressor (206 aa).

The H-T-H motif DNA-binding region spans 28–48; sequence VREIGQAVGLASSSTVHGHLS. Catalysis depends on for autocatalytic cleavage activity residues Ser128 and Lys166.

The protein belongs to the peptidase S24 family. Homodimer.

The catalysed reaction is Hydrolysis of Ala-|-Gly bond in repressor LexA.. Its function is as follows. Represses a number of genes involved in the response to DNA damage (SOS response), including recA and lexA. In the presence of single-stranded DNA, RecA interacts with LexA causing an autocatalytic cleavage which disrupts the DNA-binding part of LexA, leading to derepression of the SOS regulon and eventually DNA repair. This chain is LexA repressor, found in Bacillus thuringiensis (strain Al Hakam).